The primary structure comprises 363 residues: 3-isopropylmalate dehydrogenase (363 aa).

79–92 is an NAD(+) binding site; the sequence is GPKWEHLPPNEQPE. Substrate-binding residues include Arg-100, Arg-110, Arg-139, and Asp-228. Residues Asp-228, Asp-252, and Asp-256 each coordinate Mg(2+). 286–298 lines the NAD(+) pocket; it reads GSAPDIAGKNIAN.

This sequence belongs to the isocitrate and isopropylmalate dehydrogenases family. LeuB type 1 subfamily. In terms of assembly, homodimer. Requires Mg(2+) as cofactor. Mn(2+) serves as cofactor.

The protein localises to the cytoplasm. The catalysed reaction is (2R,3S)-3-isopropylmalate + NAD(+) = 4-methyl-2-oxopentanoate + CO2 + NADH. It participates in amino-acid biosynthesis; L-leucine biosynthesis; L-leucine from 3-methyl-2-oxobutanoate: step 3/4. Catalyzes the oxidation of 3-carboxy-2-hydroxy-4-methylpentanoate (3-isopropylmalate) to 3-carboxy-4-methyl-2-oxopentanoate. The product decarboxylates to 4-methyl-2 oxopentanoate. In Vibrio cholerae serotype O1 (strain ATCC 39315 / El Tor Inaba N16961), this protein is 3-isopropylmalate dehydrogenase.